A 102-amino-acid chain; its full sequence is Phosphoribosyl-ATP pyrophosphatase (102 aa).

It belongs to the PRA-PH family.

Its subcellular location is the cytoplasm. The catalysed reaction is 1-(5-phospho-beta-D-ribosyl)-ATP + H2O = 1-(5-phospho-beta-D-ribosyl)-5'-AMP + diphosphate + H(+). It functions in the pathway amino-acid biosynthesis; L-histidine biosynthesis; L-histidine from 5-phospho-alpha-D-ribose 1-diphosphate: step 2/9. This is Phosphoribosyl-ATP pyrophosphatase from Ignicoccus hospitalis (strain KIN4/I / DSM 18386 / JCM 14125).